Here is a 529-residue protein sequence, read N- to C-terminus: Auxin response factor 13 (529 aa).

The segment at Met1–Pro22 is disordered. The span at Ala7 to Pro22 shows a compositional bias: pro residues. The TF-B3 DNA-binding region spans Tyr128 to Ala234. 2 disordered regions span residues Ile443 to Ala462 and Pro497 to Leu529. The span at Val444–Ser461 shows a compositional bias: polar residues. Acidic residues predominate over residues Gly499–Ser510. Over residues Asp511–Asn523 the composition is skewed to polar residues.

It belongs to the ARF family. As to quaternary structure, homo and heterodimers. As to expression, expressed in roots, culms, leaves and young panicles.

It localises to the nucleus. Its function is as follows. Auxin response factors (ARFs) are transcriptional factors that bind specifically to the DNA sequence 5'-TGTCTC-3' found in the auxin-responsive promoter elements (AuxREs). This Oryza sativa subsp. japonica (Rice) protein is Auxin response factor 13 (ARF13).